A 294-amino-acid polypeptide reads, in one-letter code: Bifunctional protein FolD (294 aa).

NADP(+) contacts are provided by residues 164 to 166, Ser193, and Ile234; that span reads GRS.

The protein belongs to the tetrahydrofolate dehydrogenase/cyclohydrolase family. Homodimer.

The catalysed reaction is (6R)-5,10-methylene-5,6,7,8-tetrahydrofolate + NADP(+) = (6R)-5,10-methenyltetrahydrofolate + NADPH. The enzyme catalyses (6R)-5,10-methenyltetrahydrofolate + H2O = (6R)-10-formyltetrahydrofolate + H(+). It participates in one-carbon metabolism; tetrahydrofolate interconversion. In terms of biological role, catalyzes the oxidation of 5,10-methylenetetrahydrofolate to 5,10-methenyltetrahydrofolate and then the hydrolysis of 5,10-methenyltetrahydrofolate to 10-formyltetrahydrofolate. The protein is Bifunctional protein FolD of Flavobacterium psychrophilum (strain ATCC 49511 / DSM 21280 / CIP 103535 / JIP02/86).